A 57-amino-acid chain; its full sequence is uncharacterized protein (57 aa).

A helical transmembrane segment spans residues 34–54 (AALLDAAALVVIPGLLTAAAV).

The protein resides in the membrane. This is an uncharacterized protein from Dictyostelium discoideum (Social amoeba).